Consider the following 545-residue polypeptide: Glucose-6-phosphate isomerase (545 aa).

E351 (proton donor) is an active-site residue. Residues H382 and K510 contribute to the active site.

This sequence belongs to the GPI family.

Its subcellular location is the cytoplasm. The enzyme catalyses alpha-D-glucose 6-phosphate = beta-D-fructose 6-phosphate. The protein operates within carbohydrate biosynthesis; gluconeogenesis. It functions in the pathway carbohydrate degradation; glycolysis; D-glyceraldehyde 3-phosphate and glycerone phosphate from D-glucose: step 2/4. Catalyzes the reversible isomerization of glucose-6-phosphate to fructose-6-phosphate. In Shewanella amazonensis (strain ATCC BAA-1098 / SB2B), this protein is Glucose-6-phosphate isomerase.